The primary structure comprises 142 residues: Putative transcriptional regulatory protein Mevan_1098 (142 aa).

It belongs to the Tfx family.

Functionally, putative transcriptional regulator. In Methanococcus vannielii (strain ATCC 35089 / DSM 1224 / JCM 13029 / OCM 148 / SB), this protein is Putative transcriptional regulatory protein Mevan_1098.